The following is a 198-amino-acid chain: uncharacterized protein (198 aa).

Disordered regions lie at residues 15 to 69 (RLGQ…KDTR) and 172 to 198 (FSVKESSNLSNNDSDASLDEDTLLWGL). Basic and acidic residues-rich tracts occupy residues 37–49 (HKSFENLGRDQSR) and 56–69 (FNEKQSTEPPKDTR). Residues 176–186 (ESSNLSNNDSD) show a composition bias toward low complexity. Residues 187–198 (ASLDEDTLLWGL) show a composition bias toward acidic residues.

It localises to the nucleus. This is an uncharacterized protein from Schizosaccharomyces pombe (strain 972 / ATCC 24843) (Fission yeast).